Consider the following 294-residue polypeptide: Maltose/maltodextrin import ATP-binding protein MalK (294 aa).

The 230-residue stretch at 4–233 folds into the ABC transporter domain; it reads VQLRNVTKAW…PADRFVAGFI (230 aa). Residue 36 to 43 coordinates ATP; that stretch reads GPSGCGKS.

Belongs to the ABC transporter superfamily. Maltooligosaccharide importer (TC 3.A.1.1.1) family. As to quaternary structure, the complex is composed of two ATP-binding proteins (MalK), two transmembrane proteins (MalG and MalK) and a solute-binding protein (MalE).

The protein localises to the cell inner membrane. It catalyses the reaction D-maltose(out) + ATP + H2O = D-maltose(in) + ADP + phosphate + H(+). Part of the ABC transporter complex MalEFGK involved in maltose/maltodextrin import. Responsible for energy coupling to the transport system. The protein is Maltose/maltodextrin import ATP-binding protein MalK of Klebsiella aerogenes (Enterobacter aerogenes).